The primary structure comprises 492 residues: Membrane-bound glycerophospholipid O-acyltransferase 1 (492 aa).

Helical transmembrane passes span 33–53 (VNFV…RIYL), 69–89 (ILGI…LFVL), 125–145 (IYIF…MIVT), 179–199 (PSLL…AGPC), 237–257 (MGAV…FLTL), and 296–316 (YFAW…FNGM). Catalysis depends on residues N349 and H380. 3 helical membrane-spanning segments follow: residues 370–390 (VLTF…YFTF), 423–443 (VVTW…FVML), and 452–472 (YKSV…FLPI). S486 carries the phosphoserine modification.

Belongs to the membrane-bound acyltransferase family. Highly expressed in stomach, epididymis, and colon.

The protein localises to the endoplasmic reticulum membrane. The catalysed reaction is a 1-acyl-sn-glycero-3-phosphoethanolamine + an acyl-CoA = a 1,2-diacyl-sn-glycero-3-phosphoethanolamine + CoA. It carries out the reaction a 1-acyl-sn-glycero-3-phospho-L-serine + an acyl-CoA = a 1,2-diacyl-sn-glycero-3-phospho-L-serine + CoA. It catalyses the reaction a 1-acyl-sn-glycero-3-phosphocholine + an acyl-CoA = a 1,2-diacyl-sn-glycero-3-phosphocholine + CoA. The enzyme catalyses a 1-O-(1Z-alkenyl)-sn-glycero-3-phosphoethanolamine + (9Z)-octadecenoyl-CoA = 1-O-(1Z)-alkenyl-2-(9Z)-octadecenoyl-sn-glycero-3-phosphoethanolamine + CoA. The catalysed reaction is 1-octadecanoyl-sn-glycero-3-phosphoethanolamine + (9Z)-octadecenoyl-CoA = 1-octadecanoyl-2-(9Z-octadecenoyl)-sn-glycero-3-phosphoethanolamine + CoA. It carries out the reaction 1-(9Z-octadecenoyl)-sn-glycero-3-phospho-L-serine + (9Z)-octadecenoyl-CoA = 1,2-di-(9Z)-octadecenoyl-sn-glycero-3-phospho-L-serine + CoA. It catalyses the reaction 1-(9Z-octadecenoyl)-sn-glycero-3-phosphoethanolamine + (9Z)-octadecenoyl-CoA = 1,2-di-(9Z-octadecenoyl)-sn-glycero-3-phosphoethanolamine + CoA. The enzyme catalyses 1-hexadecanoyl-sn-glycero-3-phosphoethanolamine + (9Z)-octadecenoyl-CoA = 1-hexadecanoyl-2-(9Z-octadecenoyl)-sn-glycero-3-phosphoethanolamine + CoA. The catalysed reaction is 1-(10Z-heptadecenoyl)-sn-glycero-3-phosphoethanolamine + hexadecanoyl-CoA = 1-(10Z-heptadecenoyl)-2-hexadecanoyl-sn-glycero-3-phosphoethanolamine + CoA. It carries out the reaction 1-(9Z-octadecenoyl)-sn-glycero-3-phospho-L-serine + octadecanoyl-CoA = 1-(9Z-octadecenoyl)-2-octadecanoyl-sn-glycero-3-phospho-L-serine + CoA. It catalyses the reaction 1-(9Z-octadecenoyl)-sn-glycero-3-phospho-L-serine + (9Z)-hexadecenoyl-CoA = 1-(9Z-octadecenoyl)-2-(9Z-hexadecenoyl)-sn-glycero-3-phospho-L-serine + CoA. The enzyme catalyses 1-(9Z-octadecenoyl)-sn-glycero-3-phospho-L-serine + (9Z,12Z)-octadecadienoyl-CoA = 1-(9Z-octadecenoyl)-2-(9Z,12Z-octadienoyl)-sn-glycero-3-phospho-L-serine + CoA. The catalysed reaction is 1-hexadecanoyl-sn-glycero-3-phosphocholine + (9Z)-octadecenoyl-CoA = 1-hexadecanoyl-2-(9Z-octadecenoyl)-sn-glycero-3-phosphocholine + CoA. It carries out the reaction 1-(10Z-heptadecenoyl)-sn-glycero-3-phosphoethanolamine + (9Z)-octadecenoyl-CoA = 1-(10Z-heptadecenoyl)-2-(9Z-octadecenoyl)-sn-glycero-3-phosphoethanolamine + CoA. It participates in lipid metabolism; phospholipid metabolism. Its function is as follows. Acyltransferase which catalyzes the transfer of an acyl group from an acyl-CoA towards a lysophospholipid producing a phospholipid and participates in the reacylation step of the phospholipid remodeling pathway also known as the Lands cycle. Acts on lysophosphatidylserine (1-acyl-2-hydroxy-sn-glycero-3-phospho-L-serine or LPS) and lysophosphatidylethanolamine (1-acyl-sn-glycero-3-phosphoethanolamine or LPE), and to a lesser extend lysophosphatidylcholine. Prefers oleoyl-CoA as the acyl donor and 1-oleoyl-LPE as acceptor. May play a role in neurite outgrowth during neuronal differentiation. The polypeptide is Membrane-bound glycerophospholipid O-acyltransferase 1 (Mus musculus (Mouse)).